We begin with the raw amino-acid sequence, 497 residues long: Probable malate:quinone oxidoreductase (497 aa).

This sequence belongs to the MQO family. Requires FAD as cofactor.

The catalysed reaction is (S)-malate + a quinone = a quinol + oxaloacetate. The protein operates within carbohydrate metabolism; tricarboxylic acid cycle; oxaloacetate from (S)-malate (quinone route): step 1/1. This is Probable malate:quinone oxidoreductase from Bacillus cereus (strain ATCC 14579 / DSM 31 / CCUG 7414 / JCM 2152 / NBRC 15305 / NCIMB 9373 / NCTC 2599 / NRRL B-3711).